A 1024-amino-acid chain; its full sequence is Error-prone DNA polymerase (1024 aa).

It belongs to the DNA polymerase type-C family. DnaE2 subfamily.

It is found in the cytoplasm. It catalyses the reaction DNA(n) + a 2'-deoxyribonucleoside 5'-triphosphate = DNA(n+1) + diphosphate. Functionally, DNA polymerase involved in damage-induced mutagenesis and translesion synthesis (TLS). It is not the major replicative DNA polymerase. This Vibrio parahaemolyticus serotype O3:K6 (strain RIMD 2210633) protein is Error-prone DNA polymerase.